A 434-amino-acid polypeptide reads, in one-letter code: Trigger factor 2 (434 aa).

Positions 164–247 (GDTVTVDYDC…VKKVERIEIL (84 aa)) constitute a PPIase FKBP-type domain.

This sequence belongs to the FKBP-type PPIase family. Tig subfamily.

The protein resides in the cytoplasm. The enzyme catalyses [protein]-peptidylproline (omega=180) = [protein]-peptidylproline (omega=0). In terms of biological role, involved in protein export. Acts as a chaperone by maintaining the newly synthesized protein in an open conformation. Functions as a peptidyl-prolyl cis-trans isomerase. This chain is Trigger factor 2, found in Desulfitobacterium hafniense (strain Y51).